Reading from the N-terminus, the 302-residue chain is MLMSRISYRRLDGILLLDKPAGISSNSALQVARRLLRAKKGGHTGSLDPLATGLLPLCFGEATKIAGLLLDSTKAYDADVLLGTTTTTDDAEGAVLLTRPVPTLDAEMVDALIPQLIGRIRQRAPIYSALKQGGEPLYAKARRGEVVNAPVREVEVHAIELLFLATPRLQLRVTCGSGTYIRSLVRDLGEILGCGAHINALRRRWVAPFQIPKMLTLDALEQALSAGRDPDSLLLPLVEGLAGFPALELDAQRLACFRLGQRLRDHSFQTGRVAVFSRDGIPAGLGEVDSEGLLVPQRLFNL.

The active-site Nucleophile is the Asp-48.

This sequence belongs to the pseudouridine synthase TruB family. Type 1 subfamily.

It carries out the reaction uridine(55) in tRNA = pseudouridine(55) in tRNA. Responsible for synthesis of pseudouridine from uracil-55 in the psi GC loop of transfer RNAs. In Xylella fastidiosa (strain Temecula1 / ATCC 700964), this protein is tRNA pseudouridine synthase B.